We begin with the raw amino-acid sequence, 272 residues long: Phytolongin Phyl2.2 (272 aa).

The Longin domain occupies 12–116 (CIAKGTVVLA…LINPVSHCLQ (105 aa)). A helical; Anchor for type IV membrane protein transmembrane segment spans residues 243 to 263 (WVVLMFDFCICAVLFGIWLWI).

This sequence belongs to the synaptobrevin family.

The protein localises to the membrane. Functionally, non-SNARE longin protein involved in membrane-trafficking machinery. This chain is Phytolongin Phyl2.2, found in Arabidopsis thaliana (Mouse-ear cress).